Here is a 235-residue protein sequence, read N- to C-terminus: Transmembrane emp24 domain-containing protein 9 (235 aa).

Residues 1 to 37 form the signal peptide; the sequence is MAVELGVLLVRPRPGTGLGRVMRTLLLVLWLATRGSA. Residues 38–202 are Lumenal-facing; sequence LYFHIGETEK…RQTSESTNQR (165 aa). Positions 47–145 constitute a GOLD domain; it reads KKCFIEEIPD…MLRVHLDIQV (99 aa). Residues 121-160 are required for interaction with STX17; that stretch reads CLHSNSTKFSLFAGGMLRVHLDIQVGEHANDYAEIAAKDK. Residue N125 is glycosylated (N-linked (GlcNAc...) asparagine). The stretch at 154–184 forms a coiled coil; the sequence is EIAAKDKLSELQLRVRQLVEQVEQIQKEQNY. At K160 the chain carries N6-acetyllysine. Residues 203–222 form a helical membrane-spanning segment; sequence VLWWSILQTLILVAIGVWQM. Over 223-235 the chain is Cytoplasmic; the sequence is RHLKSFFEAKKLV. Residues 228 to 229 carry the COPII vesicle coat-binding motif; it reads FF. The COPI vesicle coat-binding signature appears at 228 to 235; it reads FFEAKKLV.

Belongs to the EMP24/GP25L family. In terms of assembly, monomer and homodimer in endoplasmic reticulum. Predominantly monomeric and to lesser extent homodimeric in endoplasmic reticulum-Golgi intermediate compartment and cis-Golgi network. Probably oligomerizes with other members of the EMP24/GP25L family such as TMED2, TMED7 and TMED10. Interacts with TMED5. Interacts (via C-terminus) with COPG1; the interaction involves dimeric TMED9. Interacts with PTPN2 and SPAST. Interacts with STX17; the interaction is direct. Post-translationally, N-linked glycosylated containing high mannose.

Its subcellular location is the endoplasmic reticulum membrane. The protein localises to the golgi apparatus. It localises to the cis-Golgi network membrane. It is found in the endoplasmic reticulum-Golgi intermediate compartment membrane. The protein resides in the trans-Golgi network membrane. In terms of biological role, appears to be involved in vesicular protein trafficking, mainly in the early secretory pathway. In COPI vesicle-mediated retrograde transport involved in the coatomer recruitment to membranes of the early secretory pathway. Increases coatomer-dependent activity of ARFGAP2. Thought to play a crucial role in the specific retention of p24 complexes in cis-Golgi membranes; specifically contributes to the coupled localization of TMED2 and TMED10 in the cis-Golgi network. May be involved in organization of intracellular membranes, such as of the ER-Golgi intermediate compartment and the Golgi apparatus. Involved in ER localization of PTPN2 isoform PTPB. The sequence is that of Transmembrane emp24 domain-containing protein 9 (TMED9) from Homo sapiens (Human).